We begin with the raw amino-acid sequence, 129 residues long: Glycine cleavage system H protein (129 aa).

The Lipoyl-binding domain maps to 24–106; that stretch reads TYTVGITEHA…YAGGWIFKIK (83 aa). Lysine 65 carries the post-translational modification N6-lipoyllysine.

The protein belongs to the GcvH family. In terms of assembly, the glycine cleavage system is composed of four proteins: P, T, L and H. (R)-lipoate serves as cofactor.

In terms of biological role, the glycine cleavage system catalyzes the degradation of glycine. The H protein shuttles the methylamine group of glycine from the P protein to the T protein. The chain is Glycine cleavage system H protein from Escherichia coli O7:K1 (strain IAI39 / ExPEC).